The primary structure comprises 614 residues: Maltose permease MAL61 (614 aa).

Residues 1–48 (MKGLSSLINRKKDRNDSHLDEIENGVNATEFNSIEMEEQGKKSDFDLS) form a disordered region. Over 1–108 (MKGLSSLINR…AAAWSLLVST (108 aa)) the chain is Cytoplasmic. Residues 38–48 (EQGKKSDFDLS) are compositionally biased toward basic and acidic residues. A helical transmembrane segment spans residues 109-129 (TLIQEGYDTAILGAFYALPVF). The Extracellular portion of the chain corresponds to 130 to 144 (QKKYGSLNSNTGDYE). The helical transmembrane segment at 145-165 (ISVSWQIGLCLCYMAGEIVGL) threads the bilayer. Topologically, residues 166–180 (QVTGPSVDYMGNRYT) are cytoplasmic. The helical transmembrane segment at 181–201 (LIMALFFLAAFIFILYFCKSL) threads the bilayer. Residue Gly202 is a topological domain, extracellular. The helical transmembrane segment at 203-223 (MIAVGQALCGMPWGCFQCLTV) threads the bilayer. Residues 224 to 236 (SYASEICPLALRY) lie on the Cytoplasmic side of the membrane. Residues 237–257 (YLTTYSNLCWTFGQLFAAGIM) form a helical membrane-spanning segment. Residues 258–272 (KNSQNKYANSELGYK) lie on the Extracellular side of the membrane. A helical membrane pass occupies residues 273–293 (LPFALQWIWPLPLAVGIFLAP). The Cytoplasmic segment spans residues 294–364 (ESPWWLVKKG…KDGINRRRTR (71 aa)). A helical transmembrane segment spans residues 365-385 (IACLCWIGQCSCGASLIGYST). The Extracellular segment spans residues 386-398 (YFYEKAGVSTDTA). Residues 399–419 (FTFSIIQYCLGIAATFVSWWA) traverse the membrane as a helical segment. Over 420–427 (SKYCGRFD) the chain is Cytoplasmic. A helical transmembrane segment spans residues 428-448 (LYAFGLAFQAIMFFIIGGLGC). The Extracellular portion of the chain corresponds to 449–460 (SDTHGAKMGSGA). The chain crosses the membrane as a helical span at residues 461-481 (LLMVVAFFYNLGIAPVVFCLV). Residues 482 to 493 (SEMPSSRLRTKT) lie on the Cytoplasmic side of the membrane. Residues 494–514 (IILARNAYNVIQVVVTVLIMY) form a helical membrane-spanning segment. Residues 515–526 (QLNSEKWNWGAK) are Extracellular-facing. The chain crosses the membrane as a helical span at residues 527–547 (SGFFWGGFCLATLAWAVVDLP). Residues 548 to 614 (ETAGRTFIEI…GRSTPSVVNK (67 aa)) lie on the Cytoplasmic side of the membrane. Residues 594 to 614 (KEDLETSVVDEGRSTPSVVNK) form a disordered region.

Belongs to the major facilitator superfamily. Sugar transporter (TC 2.A.1.1) family.

The protein resides in the membrane. Functionally, transporter for maltose. This is Maltose permease MAL61 (MAL61) from Saccharomyces cerevisiae (Baker's yeast).